A 213-amino-acid chain; its full sequence is tRNA (guanine-N(7)-)-methyltransferase (213 aa).

S-adenosyl-L-methionine contacts are provided by Glu44, Asp69, Asp96, and Asp118. Asp118 is an active-site residue. Position 122 (Lys122) interacts with substrate. The segment at 124–129 (RHEKRR) is interaction with RNA. Substrate-binding positions include Asp154 and 191-194 (TEYE).

It belongs to the class I-like SAM-binding methyltransferase superfamily. TrmB family.

It carries out the reaction guanosine(46) in tRNA + S-adenosyl-L-methionine = N(7)-methylguanosine(46) in tRNA + S-adenosyl-L-homocysteine. It functions in the pathway tRNA modification; N(7)-methylguanine-tRNA biosynthesis. Catalyzes the formation of N(7)-methylguanine at position 46 (m7G46) in tRNA. The chain is tRNA (guanine-N(7)-)-methyltransferase from Streptococcus thermophilus (strain CNRZ 1066).